Here is a 95-residue protein sequence, read N- to C-terminus: Small ribosomal subunit protein bS6 (95 aa).

It belongs to the bacterial ribosomal protein bS6 family.

Binds together with bS18 to 16S ribosomal RNA. This Shouchella clausii (strain KSM-K16) (Alkalihalobacillus clausii) protein is Small ribosomal subunit protein bS6.